The following is a 185-amino-acid chain: Ribosome-recycling factor (185 aa).

The protein belongs to the RRF family.

The protein localises to the cytoplasm. Functionally, responsible for the release of ribosomes from messenger RNA at the termination of protein biosynthesis. May increase the efficiency of translation by recycling ribosomes from one round of translation to another. The chain is Ribosome-recycling factor from Aliivibrio salmonicida (strain LFI1238) (Vibrio salmonicida (strain LFI1238)).